The primary structure comprises 827 residues: Beta-galactosidase 1 (827 aa).

Residues 1–25 (MMGRRGSSWCRWWVALLVLAVAADA) form the signal peptide. Glutamate 187 (proton donor) is an active-site residue. N-linked (GlcNAc...) asparagine glycans are attached at residues asparagine 198 and asparagine 249. Glutamate 259 functions as the Nucleophile in the catalytic mechanism. Residues asparagine 260, asparagine 366, asparagine 392, asparagine 502, asparagine 520, asparagine 578, asparagine 586, and asparagine 615 are each glycosylated (N-linked (GlcNAc...) asparagine). The region spanning 746–827 (GEAGDAVTLS…SGVLTVQATC (82 aa)) is the SUEL-type lectin domain.

The protein belongs to the glycosyl hydrolase 35 family.

It is found in the secreted. It localises to the extracellular space. The protein localises to the apoplast. It carries out the reaction Hydrolysis of terminal non-reducing beta-D-galactose residues in beta-D-galactosides.. The polypeptide is Beta-galactosidase 1 (Oryza sativa subsp. japonica (Rice)).